The following is a 414-amino-acid chain: CCA-adding enzyme (414 aa).

ATP-binding residues include glycine 8 and arginine 11. CTP-binding residues include glycine 8 and arginine 11. 2 residues coordinate Mg(2+): aspartate 21 and aspartate 23. ATP-binding residues include arginine 91, arginine 137, and arginine 140. CTP is bound by residues arginine 91, arginine 137, and arginine 140.

The protein belongs to the tRNA nucleotidyltransferase/poly(A) polymerase family. Bacterial CCA-adding enzyme type 2 subfamily. Requires Mg(2+) as cofactor.

The enzyme catalyses a tRNA precursor + 2 CTP + ATP = a tRNA with a 3' CCA end + 3 diphosphate. It catalyses the reaction a tRNA with a 3' CCA end + 2 CTP + ATP = a tRNA with a 3' CCACCA end + 3 diphosphate. Functionally, catalyzes the addition and repair of the essential 3'-terminal CCA sequence in tRNAs without using a nucleic acid template. Adds these three nucleotides in the order of C, C, and A to the tRNA nucleotide-73, using CTP and ATP as substrates and producing inorganic pyrophosphate. tRNA 3'-terminal CCA addition is required both for tRNA processing and repair. Also involved in tRNA surveillance by mediating tandem CCA addition to generate a CCACCA at the 3' terminus of unstable tRNAs. While stable tRNAs receive only 3'-terminal CCA, unstable tRNAs are marked with CCACCA and rapidly degraded. The sequence is that of CCA-adding enzyme from Buchnera aphidicola subsp. Acyrthosiphon pisum (strain Tuc7).